The sequence spans 326 residues: Diphthine methyltransferase (326 aa).

WD repeat units follow at residues 65–105 (MHCD…ELMF), 113–152 (DSSVLMLSLDFSDSGKELAVSMSNGSVLIIDIDSGVIKNK), 155–195 (EHDY…SCIW), and 293–326 (EHESMCYGGDWRHTDGLLATCSFYDKRVCLWEDI).

Belongs to the DPH7 family.

Its subcellular location is the cytoplasm. It localises to the nucleus. The catalysed reaction is diphthine methyl ester-[translation elongation factor 2] + H2O = diphthine-[translation elongation factor 2] + methanol + H(+). The protein operates within protein modification; peptidyl-diphthamide biosynthesis. Its function is as follows. Catalyzes the demethylation of diphthine methyl ester to form diphthine, an intermediate in diphthamide biosynthesis, a post-translational modification of histidine which occurs in translation elongation factor 2 (eft201 and eft202). This chain is Diphthine methyltransferase (rrt2), found in Schizosaccharomyces pombe (strain 972 / ATCC 24843) (Fission yeast).